The sequence spans 163 residues: Protein EARLY RESPONSIVE TO DEHYDRATION 15 (163 aa).

Positions 10–20 (TLNPDAPLFIP) match the PAM2-like motif. Residues 118-163 (NGEMVKKSSGNRSPRSIVEPAKYAEKPAKWGNQRVAAAPRNIHQPR) are disordered.

Interacts with PAB2, PAB4 and PAB8. Interacts with MPC. Expressed in cauline leaves, stems, rosette leaves, immature siliques and primary inflorescences.

It is found in the cytoplasm. Central component of stress responses that interacts with poly(A)-binding proteins. Negative regulator of abscisic acid (ABA) responses, including resistance to drought and freezing as well as stomatal closure regulation. Mediates resistance to the bacterial necrotroph pathogen Erwinia carotovora subsp. carotovora and promotes the induction of marker genes for systemic acquired resistance (SAR). The chain is Protein EARLY RESPONSIVE TO DEHYDRATION 15 (ERD15) from Arabidopsis thaliana (Mouse-ear cress).